The sequence spans 95 residues: UPF0473 protein PEPE_1260 (95 aa).

Belongs to the UPF0473 family.

This chain is UPF0473 protein PEPE_1260, found in Pediococcus pentosaceus (strain ATCC 25745 / CCUG 21536 / LMG 10740 / 183-1w).